A 44-amino-acid chain; its full sequence is Mu-conotoxin-like Cal 12.1.2f (44 aa).

4 cysteine pairs are disulfide-bonded: cysteine 3–cysteine 15, cysteine 10–cysteine 27, cysteine 17–cysteine 32, and cysteine 26–cysteine 38. A 6'-bromotryptophan modification is found at tryptophan 16. Proline 22 is modified (4-hydroxyproline). Residues tryptophan 36 and tryptophan 37 each carry the 6'-bromotryptophan modification. Proline 39 bears the 4-hydroxyproline mark. A 6'-bromotryptophan modification is found at tryptophan 43.

As to expression, expressed by the venom duct.

It localises to the secreted. Functionally, mu-conotoxins block voltage-gated sodium channels. This toxin reversibly blocks voltage-gated sodium channel in cephalopods, with no alteration in the voltage dependence of sodium conductance or on the kinetics of inactivation. In Californiconus californicus (California cone), this protein is Mu-conotoxin-like Cal 12.1.2f.